The following is a 181-amino-acid chain: Translation initiation factor IF-3 (181 aa).

Belongs to the IF-3 family. As to quaternary structure, monomer.

It is found in the cytoplasm. In terms of biological role, IF-3 binds to the 30S ribosomal subunit and shifts the equilibrium between 70S ribosomes and their 50S and 30S subunits in favor of the free subunits, thus enhancing the availability of 30S subunits on which protein synthesis initiation begins. This chain is Translation initiation factor IF-3, found in Azotobacter vinelandii.